Consider the following 204-residue polypeptide: Paraneoplastic antigen-like protein 8C (204 aa).

Residues 135-204 (PPATGPRELP…RRHHASDKKL (70 aa)) form a disordered region. Over residues 182–204 (VGKRGKRKNKKNRRRHHASDKKL) the composition is skewed to basic residues.

The protein belongs to the PNMA family.

The sequence is that of Paraneoplastic antigen-like protein 8C from Homo sapiens (Human).